The sequence spans 548 residues: Frizzled-7 (548 aa).

Positions 1 to 19 (MFATVSLLFCLLLQPSPSA) are cleaved as a signal peptide. Residues 20 to 230 (QQYHGEKGIS…EEEVRFARLW (211 aa)) lie on the Extracellular side of the membrane. The 120-residue stretch at 31 to 150 (PDHGFCQPIS…HGAGEICVGQ (120 aa)) folds into the FZ domain. Cystine bridges form between Cys36–Cys97, Cys44–Cys90, Cys81–Cys118, Cys107–Cys147, and Cys111–Cys135. N-linked (GlcNAc...) asparagine glycosylation occurs at Asn50. Asn151 is a glycosylation site (N-linked (GlcNAc...) asparagine). The helical transmembrane segment at 231 to 251 (VGIWAILCGISTLFTVLTYLV) threads the bilayer. Over 252-262 (DMRRFSYPERP) the chain is Cytoplasmic. A helical transmembrane segment spans residues 263 to 283 (IIFLSGCYFMVAVAYTAGFLL). Residues 284-310 (EERGVCVERFSEDSYRTVAQGTKKEGC) lie on the Extracellular side of the membrane. The chain crosses the membrane as a helical span at residues 311 to 331 (TILFMILYFFGMASSIWWVIL). The Cytoplasmic segment spans residues 332–353 (SLTWFLAAGMKWGHEAIEANSQ). A helical transmembrane segment spans residues 354 to 374 (YFHLAAWAVPAVKTITILAMG). Over 375 to 397 (QVDGDILSGVCYVGINSVDSLRG) the chain is Extracellular. Residues 398 to 418 (FVLAPLFVYLFIGTSFLLAGF) form a helical membrane-spanning segment. The Cytoplasmic portion of the chain corresponds to 419-444 (VSLFRIRTIMKHDGTKTEKLEKLMVR). The helical transmembrane segment at 445–465 (IGVFSVMYTVPATIVLACYFY) threads the bilayer. Over 466-502 (EQAFRDTWEKTWLVQTCKGFAVPCPNYNFAPMSPDFT) the chain is Extracellular. The chain crosses the membrane as a helical span at residues 503-523 (VFMIKYLMTMIVGITSSFWIW). Over 524-548 (SGKTLQSWRRFYHRLSNGGKGETAV) the chain is Cytoplasmic. The Lys-Thr-X-X-X-Trp motif, mediates interaction with the PDZ domain of Dvl family members signature appears at 526-531 (KTLQSW). Residues 546–548 (TAV) carry the PDZ-binding motif.

The protein belongs to the G-protein coupled receptor Fz/Smo family. As to quaternary structure, interacts with wnt11 and sdc4. The extracellular domain interacts with the extracellular domain of pcdh8/papc.

It is found in the cell membrane. The protein localises to the endosome membrane. In terms of biological role, receptor for Wnt proteins. Acts in both canonical and non-canonical Wnt pathways. Although different papers report differing Wnt preferences, wnt5a, wnt8b and wnt11 have been proposed as synergists. In the canonical Wnt pathway, acts via beta-catenin to promote the expression of the dorsal genes siamois, twin and nodal3 and to establish the dorsal axis of the embryo and induce dorsal mesoderm formation. In a non-canonical Wnt/planar cell polarity (PCP) pathway, acts with sdc4 and dvl2/dsh to regulate convergent extension movements in gastrulation. Triggers phosphorylation of dvl2/dsh and its translocation to the plasma membrane. In a third branch of Wnt signaling, acts in a non-canonical pathway via trimeric G proteins, and independently of dvl2/dsh, to recruit protein kinase C (PKC) to the membrane and thus activate PKC. PKC signaling controls cell sorting and tissue separation during gastrulation. This chain is Frizzled-7, found in Xenopus tropicalis (Western clawed frog).